We begin with the raw amino-acid sequence, 263 residues long: Protein STK_14130 (263 aa).

This sequence belongs to the CinA family.

The sequence is that of Protein STK_14130 from Sulfurisphaera tokodaii (strain DSM 16993 / JCM 10545 / NBRC 100140 / 7) (Sulfolobus tokodaii).